The sequence spans 645 residues: DNA mismatch repair protein MutL (645 aa).

Belongs to the DNA mismatch repair MutL/HexB family.

Functionally, this protein is involved in the repair of mismatches in DNA. It is required for dam-dependent methyl-directed DNA mismatch repair. May act as a 'molecular matchmaker', a protein that promotes the formation of a stable complex between two or more DNA-binding proteins in an ATP-dependent manner without itself being part of a final effector complex. The chain is DNA mismatch repair protein MutL from Geobacillus thermodenitrificans (strain NG80-2).